Reading from the N-terminus, the 335-residue chain is Glyceraldehyde-3-phosphate dehydrogenase (335 aa).

NAD(+)-binding positions include 15–16 (RI) and D37. Residues 155–157 (SCT), T186, R201, 214–215 (TG), and R237 each bind D-glyceraldehyde 3-phosphate. Residue C156 is the Nucleophile of the active site. NAD(+)-binding residues include Q301 and N318.

Belongs to the glyceraldehyde-3-phosphate dehydrogenase family. Homotetramer.

The protein localises to the cytoplasm. It catalyses the reaction D-glyceraldehyde 3-phosphate + phosphate + NADP(+) = (2R)-3-phospho-glyceroyl phosphate + NADPH + H(+). The enzyme catalyses D-glyceraldehyde 3-phosphate + phosphate + NAD(+) = (2R)-3-phospho-glyceroyl phosphate + NADH + H(+). Its pathway is carbohydrate degradation; glycolysis; pyruvate from D-glyceraldehyde 3-phosphate: step 1/5. In Haloarcula vallismortis (Halobacterium vallismortis), this protein is Glyceraldehyde-3-phosphate dehydrogenase (gap).